A 424-amino-acid chain; its full sequence is Serine--tRNA ligase (424 aa).

230–232 (TAE) contacts L-serine. 261–263 (RSE) provides a ligand contact to ATP. Glu284 contacts L-serine. 348-351 (EISS) lines the ATP pocket. Ser384 is an L-serine binding site.

It belongs to the class-II aminoacyl-tRNA synthetase family. Type-1 seryl-tRNA synthetase subfamily. In terms of assembly, homodimer. The tRNA molecule binds across the dimer.

It is found in the cytoplasm. It carries out the reaction tRNA(Ser) + L-serine + ATP = L-seryl-tRNA(Ser) + AMP + diphosphate + H(+). The enzyme catalyses tRNA(Sec) + L-serine + ATP = L-seryl-tRNA(Sec) + AMP + diphosphate + H(+). It participates in aminoacyl-tRNA biosynthesis; selenocysteinyl-tRNA(Sec) biosynthesis; L-seryl-tRNA(Sec) from L-serine and tRNA(Sec): step 1/1. Catalyzes the attachment of serine to tRNA(Ser). Is also able to aminoacylate tRNA(Sec) with serine, to form the misacylated tRNA L-seryl-tRNA(Sec), which will be further converted into selenocysteinyl-tRNA(Sec). In Desulfatibacillum aliphaticivorans, this protein is Serine--tRNA ligase.